A 112-amino-acid polypeptide reads, in one-letter code: UPF0235 protein Atu2660 (112 aa).

It belongs to the UPF0235 family.

The sequence is that of UPF0235 protein Atu2660 from Agrobacterium fabrum (strain C58 / ATCC 33970) (Agrobacterium tumefaciens (strain C58)).